A 551-amino-acid polypeptide reads, in one-letter code: Glucose-6-phosphate isomerase (551 aa).

D-glucose 6-phosphate contacts are provided by residues 161-162 (GS), 212-217 (SKTFTT), Q356, E360, H391, and K516. E360 acts as the Proton donor in catalysis. Active-site residues include H391 and K516.

Belongs to the GPI family. Homodimer.

Its subcellular location is the cytoplasm. The protein resides in the cytosol. The enzyme catalyses alpha-D-glucose 6-phosphate = beta-D-fructose 6-phosphate. Its pathway is carbohydrate degradation; glycolysis; D-glyceraldehyde 3-phosphate and glycerone phosphate from D-glucose: step 2/4. In terms of biological role, in the cytoplasm, catalyzes the conversion of glucose-6-phosphate to fructose-6-phosphate, the second step in glycolysis, and the reverse reaction during gluconeogenesis. This is Glucose-6-phosphate isomerase (gpi1) from Agaricus bisporus (White button mushroom).